Consider the following 368-residue polypeptide: F-box protein At3g17710 (368 aa).

One can recognise an F-box domain in the interval M1–H46.

This chain is F-box protein At3g17710, found in Arabidopsis thaliana (Mouse-ear cress).